Consider the following 238-residue polypeptide: Ribonuclease PH (238 aa).

Residues Arg86 and 124 to 126 (GTR) contribute to the phosphate site.

Belongs to the RNase PH family. As to quaternary structure, homohexameric ring arranged as a trimer of dimers.

It carries out the reaction tRNA(n+1) + phosphate = tRNA(n) + a ribonucleoside 5'-diphosphate. Functionally, phosphorolytic 3'-5' exoribonuclease that plays an important role in tRNA 3'-end maturation. Removes nucleotide residues following the 3'-CCA terminus of tRNAs; can also add nucleotides to the ends of RNA molecules by using nucleoside diphosphates as substrates, but this may not be physiologically important. Probably plays a role in initiation of 16S rRNA degradation (leading to ribosome degradation) during starvation. In Brucella anthropi (strain ATCC 49188 / DSM 6882 / CCUG 24695 / JCM 21032 / LMG 3331 / NBRC 15819 / NCTC 12168 / Alc 37) (Ochrobactrum anthropi), this protein is Ribonuclease PH.